Here is a 153-residue protein sequence, read N- to C-terminus: MAKITGNLVATGLKFGIVTARFNDFINDKLLSGAIDTLVRHGAYENDIDTAWVPGAFEIPLVAKKMATSGKYDAVICLGTVISGSTTHYDYVCNEAAKGIGAVALETGVPVIFGVLTTENIEQAIERAGTKAGNKGSECALGAIEIVNVLKAI.

Residues phenylalanine 22, 56–58 (AFE), and 80–82 (TVI) each bind 5-amino-6-(D-ribitylamino)uracil. 85-86 (ST) is a (2S)-2-hydroxy-3-oxobutyl phosphate binding site. Residue histidine 88 is the Proton donor of the active site. Phenylalanine 113 lines the 5-amino-6-(D-ribitylamino)uracil pocket. Residue arginine 127 coordinates (2S)-2-hydroxy-3-oxobutyl phosphate.

The protein belongs to the DMRL synthase family. In terms of assembly, forms an icosahedral capsid composed of 60 subunits, arranged as a dodecamer of pentamers.

The catalysed reaction is (2S)-2-hydroxy-3-oxobutyl phosphate + 5-amino-6-(D-ribitylamino)uracil = 6,7-dimethyl-8-(1-D-ribityl)lumazine + phosphate + 2 H2O + H(+). It participates in cofactor biosynthesis; riboflavin biosynthesis; riboflavin from 2-hydroxy-3-oxobutyl phosphate and 5-amino-6-(D-ribitylamino)uracil: step 1/2. Functionally, catalyzes the formation of 6,7-dimethyl-8-ribityllumazine by condensation of 5-amino-6-(D-ribitylamino)uracil with 3,4-dihydroxy-2-butanone 4-phosphate. This is the penultimate step in the biosynthesis of riboflavin. The chain is 6,7-dimethyl-8-ribityllumazine synthase from Actinobacillus pleuropneumoniae serotype 5b (strain L20).